Consider the following 267-residue polypeptide: Thiamine thiazole synthase (267 aa).

NAD(+) contacts are provided by residues Ser41, 60–61 (ER), Gly68, Val132, and 160–162 (HVD). 2 residues coordinate Fe cation: Asp162 and His177. Residue Met227 participates in NAD(+) binding. Residue Arg237 coordinates glycine.

This sequence belongs to the THI4 family. Homooctamer; tetramer of dimers. Fe(2+) is required as a cofactor.

It catalyses the reaction hydrogen sulfide + glycine + NAD(+) = ADP-5-ethyl-4-methylthiazole-2-carboxylate + nicotinamide + 3 H2O + H(+). It participates in cofactor biosynthesis; thiamine diphosphate biosynthesis. Involved in the biosynthesis of the thiazole moiety of thiamine. Catalyzes the conversion of NAD and glycine to adenosine diphosphate 5-(2-hydroxyethyl)-4-methylthiazole-2-carboxylate (ADT), an adenylated thiazole intermediate, using free sulfide as a source of sulfur. This chain is Thiamine thiazole synthase, found in Saccharolobus islandicus (strain M.14.25 / Kamchatka #1) (Sulfolobus islandicus).